The primary structure comprises 595 residues: Cardiolipin synthase (CMP-forming) / mitochondrial hydrolase fusion protein (595 aa).

Residues 1 to 24 constitute a mitochondrion transit peptide; it reads MLHTINYRSWHLAARQLGRSTFRK. 2 consecutive transmembrane segments (helical) span residues 538-560 and 564-586; these read ALQLLLLGLLITEPILPFDASFA and LFYIVGCTTIASGASYCISRNTF.

It in the N-terminal section; belongs to the HAD-like hydrolase superfamily. The protein in the C-terminal section; belongs to the CDP-alcohol phosphatidyltransferase class-I family. The cofactor is Mg(2+). In terms of processing, proteolytically cleaved, presumably during its import into the mitochondrion by mitochondrial processing peptidase.

It is found in the mitochondrion. It localises to the mitochondrion inner membrane. The catalysed reaction is a CDP-1,2-diacyl-sn-glycerol + a 1,2-diacyl-sn-glycero-3-phospho-(1'-sn-glycerol) = a cardiolipin + CMP + H(+). Catalyzes the synthesis of cardiolipin (CL) (diphosphatidylglycerol) by specifically transferring a phosphatidyl group from CDP-diacylglycerol to phosphatidylglycerol (PG). CL is a key phospholipid in mitochondrial membranes and plays important roles in maintaining the functional integrity and dynamics of mitochondria under both optimal and stress conditions. In terms of biological role, activity is dispensable for viability. This Schizosaccharomyces pombe (strain 972 / ATCC 24843) (Fission yeast) protein is Cardiolipin synthase (CMP-forming) / mitochondrial hydrolase fusion protein.